A 421-amino-acid chain; its full sequence is Serine--tRNA ligase (421 aa).

Residue 231–233 coordinates L-serine; the sequence is TAE. 262-264 contacts ATP; it reads RRE. L-serine is bound at residue E285. Residue 349–352 participates in ATP binding; the sequence is EISS. S384 is a binding site for L-serine.

This sequence belongs to the class-II aminoacyl-tRNA synthetase family. Type-1 seryl-tRNA synthetase subfamily. As to quaternary structure, homodimer. The tRNA molecule binds across the dimer.

The protein localises to the cytoplasm. It catalyses the reaction tRNA(Ser) + L-serine + ATP = L-seryl-tRNA(Ser) + AMP + diphosphate + H(+). It carries out the reaction tRNA(Sec) + L-serine + ATP = L-seryl-tRNA(Sec) + AMP + diphosphate + H(+). It functions in the pathway aminoacyl-tRNA biosynthesis; selenocysteinyl-tRNA(Sec) biosynthesis; L-seryl-tRNA(Sec) from L-serine and tRNA(Sec): step 1/1. Its function is as follows. Catalyzes the attachment of serine to tRNA(Ser). Is also able to aminoacylate tRNA(Sec) with serine, to form the misacylated tRNA L-seryl-tRNA(Sec), which will be further converted into selenocysteinyl-tRNA(Sec). This Hydrogenobaculum sp. (strain Y04AAS1) protein is Serine--tRNA ligase.